A 745-amino-acid polypeptide reads, in one-letter code: Elongation factor G, mitochondrial (745 aa).

The transit peptide at 1 to 15 (MSLITRLLTASSPLR) directs the protein to the mitochondrion. Positions 40–317 (DKIRNIGISA…AVLEYLPNPG (278 aa)) constitute a tr-type G domain. GTP contacts are provided by residues 49–56 (AHIDSGKT), 116–120 (DTPGH), and 170–173 (NKLD).

This sequence belongs to the TRAFAC class translation factor GTPase superfamily. Classic translation factor GTPase family. EF-G/EF-2 subfamily.

Its subcellular location is the mitochondrion. It participates in protein biosynthesis; polypeptide chain elongation. In terms of biological role, mitochondrial GTPase that catalyzes the GTP-dependent ribosomal translocation step during translation elongation. During this step, the ribosome changes from the pre-translocational (PRE) to the post-translocational (POST) state as the newly formed A-site-bound peptidyl-tRNA and P-site-bound deacylated tRNA move to the P and E sites, respectively. Catalyzes the coordinated movement of the two tRNA molecules, the mRNA and conformational changes in the ribosome. Essential during development as it acts as a retrograde signal from mitochondria to the nucleus to slow down cell proliferation if mitochondrial energy output is low. In Drosophila ananassae (Fruit fly), this protein is Elongation factor G, mitochondrial (ico).